The sequence spans 505 residues: Putative heat shock protein HSP 90-beta 4 (505 aa).

Residues N22, K83, and F109 each coordinate ATP. The segment at 197-248 (EKEISDDEEEKGEKEEEDKDDKEKPKTEDVGSDEEDDTDKNNKKKTKKIKEK) is disordered. Residues 200–216 (ISDDEEEKGEKEEEDKD) show a composition bias toward acidic residues.

Belongs to the heat shock protein 90 family. In terms of assembly, homodimer.

The protein resides in the cytoplasm. In terms of biological role, putative molecular chaperone that may promote the maturation, structural maintenance and proper regulation of specific target proteins. The protein is Putative heat shock protein HSP 90-beta 4 (HSP90AB4P) of Homo sapiens (Human).